The sequence spans 971 residues: Exportin-2 (971 aa).

Met-1 carries the post-translational modification N-acetylmethionine. Positions 29–102 constitute an Importin N-terminal domain; it reads AEKFLESVEG…KANIVHLMLS (74 aa). Phosphoserine is present on Ser-112. Lys-574 and Lys-824 each carry N6-acetyllysine. Ser-931 is subject to Phosphoserine.

The protein belongs to the XPO2/CSE1 family. As to quaternary structure, found in a complex with CSE1L/XPO2, Ran and KPNA2. Binds with high affinity to importin-alpha only in the presence of RanGTP. The complex is dissociated by the combined action of RanBP1 and RanGAP1. Interacts with CFTR. As to expression, ubiquitous. Detected in embryos from 5 to 17 dpc. Highly expressed in adult testis, heart, brain, lung, liver, skeletal muscle, spleen and kidney.

It is found in the cytoplasm. Its subcellular location is the nucleus. Export receptor for importin-alpha. Mediates importin-alpha re-export from the nucleus to the cytoplasm after import substrates (cargos) have been released into the nucleoplasm. In the nucleus binds cooperatively to importin-alpha and to the GTPase Ran in its active GTP-bound form. Docking of this trimeric complex to the nuclear pore complex (NPC) is mediated through binding to nucleoporins. Upon transit of a nuclear export complex into the cytoplasm, disassembling of the complex and hydrolysis of Ran-GTP to Ran-GDP (induced by RANBP1 and RANGAP1, respectively) cause release of the importin-alpha from the export receptor. CSE1L/XPO2 then return to the nuclear compartment and mediate another round of transport. The directionality of nuclear export is thought to be conferred by an asymmetric distribution of the GTP- and GDP-bound forms of Ran between the cytoplasm and nucleus. This is Exportin-2 (Cse1l) from Mus musculus (Mouse).